Consider the following 1171-residue polypeptide: Structural maintenance of chromosomes protein 2-2 (1171 aa).

Residues 2–1158 (HIKEICLEGF…DVLFRTKFVD (1157 aa)) form the Zinc-hook domain. 32–39 (GLNGSGKS) contacts ATP. Positions 172–510 (RMYENKKEAA…LANVQFTYRD (339 aa)) form a coiled coil. In terms of domain architecture, SMC hinge spans 518–635 (SKVKGVVAKL…KTTDAAKEVA (118 aa)). A coiled-coil region spans residues 674 to 1026 (HDLAEAETKF…LDEKKKETLK (353 aa)).

It belongs to the SMC family. SMC2 subfamily. Forms a heterodimer with SMC4. Component of the condensin complex, which contains the SMC2 and SMC4 heterodimer, and three non SMC subunits that probably regulate the complex: CAPH, CAPD2 and CAPG. As to expression, highly expressed in roots and young floral buds.

It localises to the nucleus. Its function is as follows. Central component of the condensin complex, a complex required for conversion of interphase chromatin into mitotic-like condense chromosomes. The condensin complex probably introduces positive supercoils into relaxed DNA in the presence of type I topoisomerases and converts nicked DNA into positive knotted forms in the presence of type II topoisomerases. Also involved in chromosome segregation in meiosis. The chain is Structural maintenance of chromosomes protein 2-2 (SMC2-2) from Arabidopsis thaliana (Mouse-ear cress).